The sequence spans 478 residues: 3-isopropylmalate dehydratase large subunit (478 aa).

[4Fe-4S] cluster contacts are provided by cysteine 347, cysteine 407, and cysteine 410.

The protein belongs to the aconitase/IPM isomerase family. LeuC type 1 subfamily. In terms of assembly, heterodimer of LeuC and LeuD. [4Fe-4S] cluster is required as a cofactor.

It catalyses the reaction (2R,3S)-3-isopropylmalate = (2S)-2-isopropylmalate. Its pathway is amino-acid biosynthesis; L-leucine biosynthesis; L-leucine from 3-methyl-2-oxobutanoate: step 2/4. Catalyzes the isomerization between 2-isopropylmalate and 3-isopropylmalate, via the formation of 2-isopropylmaleate. The sequence is that of 3-isopropylmalate dehydratase large subunit from Prochlorococcus marinus (strain MIT 9313).